The chain runs to 629 residues: Transmembrane 9 superfamily protein C1105.08 (629 aa).

The first 26 residues, 1-26 (MLLPSIPSCSFSFVVFVSVLLQTCFS), serve as a signal peptide directing secretion. The Lumenal segment spans residues 27 to 266 (FQLTPLSPKN…MHIESRQIRW (240 aa)). The N-linked (GlcNAc...) asparagine glycan is linked to asparagine 157. The chain crosses the membrane as a helical span at residues 267–287 (IFIIHSAIIDTFLIFVVSIIL). Residues 288–337 (YRTLNRDINKYNSAFVDQEDVQEDFGWKLVHGDVFRPPRRPMLFSILLGT) are Cytoplasmic-facing. The helical transmembrane segment at 338-358 (GAQLLFMSSGIVLFAIFGIVA) threads the bilayer. The Lumenal portion of the chain corresponds to 359–364 (PSRRGS). The helical transmembrane segment at 365–385 (LATATVALFIISGFVSGYVSA) threads the bilayer. Residues 386-401 (LSYKLMQGMLRKRNLL) lie on the Cytoplasmic side of the membrane. The helical transmembrane segment at 402-422 (LTPFVVPGFMLAAALFFNMVF) threads the bilayer. The Lumenal portion of the chain corresponds to 423–436 (WSKSSSSTVPFSSW). A helical transmembrane segment spans residues 437–457 (LLLIFLYLLFTVPLSFVGSLI). Residues 458-488 (GFRSREFVPPVRTNQIPRQIPSHSIWLSSFP) are Cytoplasmic-facing. Residues 489 to 509 (SAIIGGSIPFLVILIELFSIL) form a helical membrane-spanning segment. Residues 510-519 (DSLWFHPLYF) lie on the Lumenal side of the membrane. A helical membrane pass occupies residues 520 to 544 (MFGFSFFCFGILVTTCIMVSIITVY). Topologically, residues 545-558 (FQLCSENYNWWWRS) are cytoplasmic. The chain crosses the membrane as a helical span at residues 559–579 (FITPGFCGIYVFIFSVFYWFF). At 580-598 (KISSSSLATAVLYFGYSLL) the chain is on the lumenal side. A helical transmembrane segment spans residues 599–619 (ISVLVFFLCGSVGFFGAFLFV). Residues 620 to 629 (NKIYASIKID) lie on the Cytoplasmic side of the membrane.

The protein belongs to the nonaspanin (TM9SF) (TC 9.A.2) family.

It localises to the golgi apparatus membrane. The protein localises to the vacuole membrane. The protein is Transmembrane 9 superfamily protein C1105.08 of Schizosaccharomyces pombe (strain 972 / ATCC 24843) (Fission yeast).